Consider the following 405-residue polypeptide: Deoxyguanosinetriphosphate triphosphohydrolase-like protein (405 aa).

In terms of domain architecture, HD spans 75-219 (RLTHTIEVAQ…AAIADDIAYN (145 aa)).

It belongs to the dGTPase family. Type 2 subfamily.

The protein is Deoxyguanosinetriphosphate triphosphohydrolase-like protein of Rhizobium etli (strain ATCC 51251 / DSM 11541 / JCM 21823 / NBRC 15573 / CFN 42).